The following is a 509-amino-acid chain: Transcription factor atf-7 (509 aa).

Polar residues predominate over residues 283–303 (TVSSYHSPLGASSQPPSTQKS). 2 disordered regions span residues 283–318 (TVSS…EKQI) and 337–400 (NMSS…ILER). A compositionally biased stretch (basic and acidic residues) spans 308 to 318 (SWDHINGEKQI). Low complexity predominate over residues 337–364 (NMSSSGSDQDQSADMSNAGSTASTSTGN). Basic and acidic residues predominate over residues 390-400 (PDERRNTILER). In terms of domain architecture, bZIP spans 391 to 464 (DERRNTILER…TERESRCVCL (74 aa)). The tract at residues 393-413 (RRNTILERNKAAAVRYRKRKK) is basic motif. The tract at residues 419-450 (MMGRVQAMEAEKNQLLAIQTQNQVLRRELERV) is leucine-zipper.

Belongs to the bZIP family. Interacts with serine/threonine kinase pmk-1; perhaps in a manner dependent on dual specificity protein kinase sek-1. As to expression, expressed in intestinal cells.

The protein resides in the nucleus. It is found in the chromosome. Transcription factor which regulates the transcription of various genes, including those involved in innate immunity and oxidative stress responses. Binds to promoter regions of genes, probably at 5'-[GACGTCA]-3' consensus sequences. Together with transcription factor daf-19, involved in regulation of the serotonergic response of ADF neurons to pathogenic food. Modulates response to infection by the Gram-negative bacterium P.aeruginosa, acting downstream of the p38 signal transduction pathway effector serine/threonine kinase pmk-1. May act with transcription factor elt-2 to control p38 gene induction in response to bacterial infection. May be phosphorylated by pmk-1. Regulates transcription of the metallothionein gene, mtl-1, perhaps acting downstream of pmk-1. This is Transcription factor atf-7 from Caenorhabditis elegans.